Here is a 533-residue protein sequence, read N- to C-terminus: UDP-glucuronosyltransferase 1-2 (533 aa).

An N-terminal signal peptide occupies residues 1–27; that stretch reads MDTGLCVPLRGISGLLLLLCALPWAEG. N-linked (GlcNAc...) asparagine glycosylation is found at Asn-141, Asn-295, and Asn-433. The chain crosses the membrane as a helical span at residues 491 to 511; sequence VIGFLLAIVLTVVFIVFKCCA.

Belongs to the UDP-glycosyltransferase family. Expressed in kidney.

It localises to the microsome. The protein resides in the endoplasmic reticulum membrane. It catalyses the reaction glucuronate acceptor + UDP-alpha-D-glucuronate = acceptor beta-D-glucuronoside + UDP + H(+). Its function is as follows. UDPGT is of major importance in the conjugation and subsequent elimination of potentially toxic xenobiotics and endogenous compounds. The chain is UDP-glucuronosyltransferase 1-2 (Ugt1a2) from Mus musculus (Mouse).